Reading from the N-terminus, the 141-residue chain is Transcriptional regulator MraZ (141 aa).

2 consecutive SpoVT-AbrB domains span residues 5–47 and 76–119; these read TFNL…KPAD and ANLV…DKVQ.

Belongs to the MraZ family. As to quaternary structure, forms oligomers.

Its subcellular location is the cytoplasm. It localises to the nucleoid. The protein is Transcriptional regulator MraZ of Mycoplasma genitalium (strain ATCC 33530 / DSM 19775 / NCTC 10195 / G37) (Mycoplasmoides genitalium).